Here is a 694-residue protein sequence, read N- to C-terminus: Polyphosphate kinase (694 aa).

Residue asparagine 45 participates in ATP binding. Mg(2+) is bound by residues arginine 367 and arginine 397. Residue histidine 427 is the Phosphohistidine intermediate of the active site. Residues tyrosine 460, arginine 553, and histidine 580 each coordinate ATP.

This sequence belongs to the polyphosphate kinase 1 (PPK1) family. Requires Mg(2+) as cofactor. Post-translationally, an intermediate of this reaction is the autophosphorylated ppk in which a phosphate is covalently linked to a histidine residue through a N-P bond.

It carries out the reaction [phosphate](n) + ATP = [phosphate](n+1) + ADP. Its function is as follows. Catalyzes the reversible transfer of the terminal phosphate of ATP to form a long-chain polyphosphate (polyP). The protein is Polyphosphate kinase of Campylobacter coli.